The following is a 417-amino-acid chain: Actin-related protein 10 (417 aa).

The protein belongs to the actin family. As to quaternary structure, subunit of dynactin, a multiprotein complex part of a tripartite complex with dynein and a adapter, such as BICDL1, BICD2 or HOOK3. The dynactin complex is built around ACTR1A/ACTB filament and consists of an actin-related filament composed of a shoulder domain, a pointed end and a barbed end. Its length is defined by its flexible shoulder domain. The soulder is composed of 2 DCTN1 subunits, 4 DCTN2 and 2 DCTN3. The 4 DCNT2 (via N-terminus) bind the ACTR1A filament and act as molecular rulers to determine the length. The pointed end is important for binding dynein-dynactin cargo adapters. Consists of 4 subunits: ACTR10, DCNT4, DCTN5 and DCTN6. The barbed end is composed of a CAPZA1:CAPZB heterodimers, which binds ACTR1A/ACTB filament and dynactin and stabilizes dynactin.

The protein localises to the cytoplasm. It is found in the cytoskeleton. Its function is as follows. Part of the dynactin complex that activates the molecular motor dynein for ultra-processive transport along microtubules. The protein is Actin-related protein 10 (Actr10) of Mus musculus (Mouse).